The sequence spans 154 residues: CS6 fimbrial subunit A (154 aa).

An N-terminal signal peptide occupies residues 1–18; the sequence is MKKTIGLILILASFGSHA.

It localises to the fimbrium. In terms of biological role, fimbriae (also called pili), polar filaments radiating from the surface of the bacterium to a length of 0.5-1.5 micrometers and numbering 100-300 per cell, enable bacteria to colonize the epithelium of specific host organs. In Escherichia coli, this protein is CS6 fimbrial subunit A (cssA).